The primary structure comprises 561 residues: Asparagine synthetase [glutamine-hydrolyzing] (561 aa).

Cys-2 serves as the catalytic For GATase activity. Residues 2–191 (CGIWALFGSD…PGHYEVLDLK (190 aa)) enclose the Glutamine amidotransferase type-2 domain. L-glutamine-binding positions include 49-53 (RLAVV), 75-77 (NGE), and Asp-97. The Asparagine synthetase domain maps to 213-536 (HALYDSVEKL…PGRADWLTHY (324 aa)). Residues Leu-256, Ile-288, and 363-364 (SG) contribute to the ATP site. The residue at position 385 (Lys-385) is an N6-acetyllysine. Phosphothreonine is present on Thr-545. Residue Ser-557 is modified to Phosphoserine.

It carries out the reaction L-aspartate + L-glutamine + ATP + H2O = L-asparagine + L-glutamate + AMP + diphosphate + H(+). The protein operates within amino-acid biosynthesis; L-asparagine biosynthesis; L-asparagine from L-aspartate (L-Gln route): step 1/1. This chain is Asparagine synthetase [glutamine-hydrolyzing] (ASNS), found in Cricetulus griseus (Chinese hamster).